Reading from the N-terminus, the 73-residue chain is Salivary protein FS48 (73 aa).

The N-terminal stretch at 1 to 21 (MKFAFAIFVVLAILHTELISA) is a signal peptide.

The protein resides in the secreted. Functionally, salivary protein that inhibits host voltage-gated potassium channels Kv1.1/KCNA1, Kv1.2/KCNA2 and Kv1.3/KCNA3 likely via a voltage-independent pore-blocking mechanism. Suppresses expression of the Kv1.3/KCNA3 channel in lipopolysaccharide (LPS)-stimulated mouse macrophages and human T-cells. Down-regulates secretion of nitric oxide (NO) and inflammatory cytokines, such as TNF-alpha/TNF, IL-1beta/IL1B and IL6, in LPS-stimulated mouse macrophages in a manner dependent on Kv1.3/KCNA3 channel blockage. Reduces activation of MAPK and NF-kappa-B signaling pathways in LPS-stimulated mouse macrophages. Modulates intracellular Ca(2+) signaling in human PMA/ionomycin-triggered T-cells. Interferes with the activation of the MAPK, NF-kappa-B and NFATc1 pathways in human PMA/ionomycin-triggered T-cells. Reduces proliferation of human PMA/ionomycin-triggered T-cells. Down-regulates secretion of cytokines, such as TNF-alpha/TNF and IL2, in human PMA/ionomycin-triggered T-cells. In Xenopsylla cheopis (Oriental rat flea), this protein is Salivary protein FS48.